Reading from the N-terminus, the 698-residue chain is Adhesion G protein-coupled receptor F4 (698 aa).

The N-terminal stretch at 1-19 (MKPWIAMVCCLVFFLTTEC) is a signal peptide. The Extracellular portion of the chain corresponds to 20–409 (SHSKPKTHRK…VKNTILNHIT (390 aa)). 7 N-linked (GlcNAc...) asparagine glycosylation sites follow: N61, N168, N213, N268, N290, N344, and N375. A GAIN-B domain is found at 250–401 (RISHSSSEHS…SILMSSKPVK (152 aa)). Disulfide bonds link C353–C380 and C368–C382. The interval 353–401 (CVSWDPATGQWDESPCTVMSDINSTVKCRCRHTKAVTSFSILMSSKPVK) is GPS. The chain crosses the membrane as a helical span at residues 410–430 (FIGLSISIFSLVLCLVIEAIV). The Cytoplasmic portion of the chain corresponds to 431–444 (WSRVVVTEISYMRH). Residues 445–465 (VCIVNIAVSLLTANVWFIIGS) traverse the membrane as a helical segment. An N-linked (GlcNAc...) asparagine glycan is attached at N466. The Extracellular portion of the chain corresponds to 466–486 (NFSANVQEDHKWCVAVTFLCH). The helical transmembrane segment at 487–507 (FFFLSLFFWMLFKALLIVYGI) threads the bilayer. The Cytoplasmic portion of the chain corresponds to 508–518 (LVVFRRMMKSR). Residues 519 to 539 (MMAIGFAIGYGCPLVIAVITV) traverse the membrane as a helical segment. At 540 to 566 (TVTEPGEGYTRKDACWLNWNQTKALFA) the chain is on the extracellular side. An N-linked (GlcNAc...) asparagine glycan is attached at N559. A helical transmembrane segment spans residues 567 to 587 (FAIPALAIVAVNLLVVLAVAI). Topologically, residues 588-611 (NTQRPLIGSSKSQDMAIVFRISKN) are cytoplasmic. Residues 612 to 632 (VAILTPLLGLTWGFGLTTLLE) form a helical membrane-spanning segment. Over 633-635 (GVH) the chain is Extracellular. The chain crosses the membrane as a helical span at residues 636–656 (LVFHIIFALLNAFQGFFILLF). Residues 657–698 (GTIMDHKIRDALRMRVSSLKGKSRAAEKVSLSPANGSRILNR) are Cytoplasmic-facing.

It belongs to the G-protein coupled receptor 2 family. Adhesion G-protein coupled receptor (ADGR) subfamily. Expressed in squamous epithelia.

It is found in the membrane. In terms of biological role, orphan receptor. The polypeptide is Adhesion G protein-coupled receptor F4 (Adgrf4) (Mus musculus (Mouse)).